The sequence spans 202 residues: Small ribosomal subunit protein uS5 (202 aa).

Positions leucine 46–valine 109 constitute an S5 DRBM domain.

The protein belongs to the universal ribosomal protein uS5 family. Part of the 30S ribosomal subunit. Contacts protein S4.

In terms of biological role, with S4 and S12 plays an important role in translational accuracy. This chain is Small ribosomal subunit protein uS5, found in Thermofilum pendens (strain DSM 2475 / Hrk 5).